Consider the following 222-residue polypeptide: 3,4-dihydroxy-2-butanone 4-phosphate synthase (222 aa).

D-ribulose 5-phosphate contacts are provided by residues 37 to 38, D42, 150 to 154, and E174; these read RE and RPGHT. E38 is a Mg(2+) binding site. H153 is a Mg(2+) binding site.

It belongs to the DHBP synthase family. Homodimer. Requires Mg(2+) as cofactor. The cofactor is Mn(2+).

It catalyses the reaction D-ribulose 5-phosphate = (2S)-2-hydroxy-3-oxobutyl phosphate + formate + H(+). It participates in cofactor biosynthesis; riboflavin biosynthesis; 2-hydroxy-3-oxobutyl phosphate from D-ribulose 5-phosphate: step 1/1. Functionally, catalyzes the conversion of D-ribulose 5-phosphate to formate and 3,4-dihydroxy-2-butanone 4-phosphate. This chain is 3,4-dihydroxy-2-butanone 4-phosphate synthase, found in Chlorobium limicola (strain DSM 245 / NBRC 103803 / 6330).